Reading from the N-terminus, the 150-residue chain is uncharacterized protein (150 aa).

The region spanning 4-149 (IQIRNYQPGD…TNFYMRYKPQ (146 aa)) is the N-acetyltransferase domain.

Belongs to the acetyltransferase family.

This is an uncharacterized protein from Escherichia coli (strain K12).